Here is a 329-residue protein sequence, read N- to C-terminus: MKPLNIIFAGTPDFAARHLQALIDSEHNIIGVYSQPDRPAGRGKKLQASPVKSLAIEHNLPVFQPKSLRDEQAQAELANLNADIMVVVAYGLILPKVVLDTPKLGCINVHGSILPRWRGAAPIQRALWAGDTETGVTIMQMDIGLDTGDMLLKTRLPIEDNDTSASLYEKLALQGPDALIEALTGLAKGELTAEKQDESLANYAEKLSKEEAELDWSKSALELWREIRAFNPWPISHFTHQDASIKVRESAVSNLSSDAPAGTIISAGKQGIDIATGDGVLTLLNMQLPGKKPLSVGDILNSRGEWFTPGTLLNSKKLIGKEPAVKEAE.

112-115 is a binding site for (6S)-5,6,7,8-tetrahydrofolate; it reads SILP.

This sequence belongs to the Fmt family.

It catalyses the reaction L-methionyl-tRNA(fMet) + (6R)-10-formyltetrahydrofolate = N-formyl-L-methionyl-tRNA(fMet) + (6S)-5,6,7,8-tetrahydrofolate + H(+). Attaches a formyl group to the free amino group of methionyl-tRNA(fMet). The formyl group appears to play a dual role in the initiator identity of N-formylmethionyl-tRNA by promoting its recognition by IF2 and preventing the misappropriation of this tRNA by the elongation apparatus. This is Methionyl-tRNA formyltransferase from Shewanella sediminis (strain HAW-EB3).